Reading from the N-terminus, the 1390-residue chain is DNA-directed RNA polymerase subunit beta' (1390 aa).

Zn(2+)-binding residues include Cys-73, Cys-75, Cys-88, and Cys-91. Residues Asp-464, Asp-466, and Asp-468 each contribute to the Mg(2+) site. Zn(2+) is bound by residues Cys-810, Cys-884, Cys-891, and Cys-894. The segment at 1365 to 1390 (EKKEQKIYGNGEEPAKEQKWIPQAGT) is disordered.

This sequence belongs to the RNA polymerase beta' chain family. The RNAP catalytic core consists of 2 alpha, 1 beta, 1 beta' and 1 omega subunit. When a sigma factor is associated with the core the holoenzyme is formed, which can initiate transcription. Mg(2+) is required as a cofactor. The cofactor is Zn(2+).

The catalysed reaction is RNA(n) + a ribonucleoside 5'-triphosphate = RNA(n+1) + diphosphate. Functionally, DNA-dependent RNA polymerase catalyzes the transcription of DNA into RNA using the four ribonucleoside triphosphates as substrates. This chain is DNA-directed RNA polymerase subunit beta', found in Methylacidiphilum infernorum (isolate V4) (Methylokorus infernorum (strain V4)).